The sequence spans 102 residues: Small ribosomal subunit protein uS10 (102 aa).

This sequence belongs to the universal ribosomal protein uS10 family. Part of the 30S ribosomal subunit.

In terms of biological role, involved in the binding of tRNA to the ribosomes. The sequence is that of Small ribosomal subunit protein uS10 from Bifidobacterium longum subsp. infantis (strain ATCC 15697 / DSM 20088 / JCM 1222 / NCTC 11817 / S12).